Consider the following 288-residue polypeptide: Pantothenate synthetase (288 aa).

ATP is bound at residue 30–37 (MGALHEGH). His-37 acts as the Proton donor in catalysis. Gln-61 lines the (R)-pantoate pocket. Gln-61 is a beta-alanine binding site. 147–150 (GEKD) is an ATP binding site. Gln-153 contributes to the (R)-pantoate binding site. ATP is bound by residues Val-176 and 184–187 (ISSR).

This sequence belongs to the pantothenate synthetase family. In terms of assembly, homodimer.

The protein resides in the cytoplasm. It carries out the reaction (R)-pantoate + beta-alanine + ATP = (R)-pantothenate + AMP + diphosphate + H(+). Its pathway is cofactor biosynthesis; (R)-pantothenate biosynthesis; (R)-pantothenate from (R)-pantoate and beta-alanine: step 1/1. Functionally, catalyzes the condensation of pantoate with beta-alanine in an ATP-dependent reaction via a pantoyl-adenylate intermediate. In Chlorobium phaeobacteroides (strain BS1), this protein is Pantothenate synthetase.